The following is a 559-amino-acid chain: Formate--tetrahydrofolate ligase (559 aa).

67–74 (TPAGEGKS) contacts ATP.

This sequence belongs to the formate--tetrahydrofolate ligase family.

The catalysed reaction is (6S)-5,6,7,8-tetrahydrofolate + formate + ATP = (6R)-10-formyltetrahydrofolate + ADP + phosphate. Its pathway is one-carbon metabolism; tetrahydrofolate interconversion. This chain is Formate--tetrahydrofolate ligase, found in Lactobacillus delbrueckii subsp. bulgaricus (strain ATCC BAA-365 / Lb-18).